A 240-amino-acid polypeptide reads, in one-letter code: Small ribosomal subunit protein uS3 (240 aa).

One can recognise a KH type-2 domain in the interval 21-92 (LNEFFTRELA…TIVLYAERVQ (72 aa)). Residues threonine 44 and threonine 70 each carry the phosphothreonine modification. At serine 97 the chain carries Phosphoserine. Lysine 106 is covalently cross-linked (Glycyl lysine isopeptide (Lys-Gly) (interchain with G-Cter in ubiquitin)). Serine 129 bears the Phosphoserine mark. Residues lysine 132 and lysine 141 each participate in a glycyl lysine isopeptide (Lys-Gly) (interchain with G-Cter in ubiquitin) cross-link. Arginine 146 carries the post-translational modification Omega-N-methylarginine; by SFM1. Residues lysine 151, lysine 200, and lysine 212 each participate in a glycyl lysine isopeptide (Lys-Gly) (interchain with G-Cter in ubiquitin) cross-link. Residues 212 to 240 (KEEEPILAPSVKDYRPAEETEAQAEPVEA) are disordered. Serine 221 carries the phosphoserine modification. The span at 230-240 (ETEAQAEPVEA) shows a compositional bias: acidic residues. Phosphothreonine is present on threonine 231.

It belongs to the universal ribosomal protein uS3 family. As to quaternary structure, component of the small ribosomal subunit (SSU). Mature yeast ribosomes consist of a small (40S) and a large (60S) subunit. The 40S small subunit contains 1 molecule of ribosomal RNA (18S rRNA) and 33 different proteins (encoded by 57 genes). The large 60S subunit contains 3 rRNA molecules (25S, 5.8S and 5S rRNA) and 46 different proteins (encoded by 81 genes). Post-translationally, ubiquitinated at Lys-212 in response to stalled ribosomes. Ubiquitination leads to activation of the No-Go Decay (NGD) pathway and degradation of non-functional 18S rRNA: first monoubiquitinated at Lys-212 by MAG2, followed by formation of 'Lys-63'-linked polyubiquitin chains on monoubiquitin by HEL2 and RSP5.

It localises to the cytoplasm. Its function is as follows. Component of the ribosome, a large ribonucleoprotein complex responsible for the synthesis of proteins in the cell. The small ribosomal subunit (SSU) binds messenger RNAs (mRNAs) and translates the encoded message by selecting cognate aminoacyl-transfer RNA (tRNA) molecules. The large subunit (LSU) contains the ribosomal catalytic site termed the peptidyl transferase center (PTC), which catalyzes the formation of peptide bonds, thereby polymerizing the amino acids delivered by tRNAs into a polypeptide chain. The nascent polypeptides leave the ribosome through a tunnel in the LSU and interact with protein factors that function in enzymatic processing, targeting, and the membrane insertion of nascent chains at the exit of the ribosomal tunnel. This is Small ribosomal subunit protein uS3 from Saccharomyces cerevisiae (strain ATCC 204508 / S288c) (Baker's yeast).